We begin with the raw amino-acid sequence, 50 residues long: Mast cell degranulating peptide (50 aa).

Positions Met-1–Ser-27 are cleaved as a signal peptide. Lys-29 bears the N6-formyllysine; partial mark. Cystine bridges form between Cys-30–Cys-42 and Cys-32–Cys-46. N6-formyllysine; partial is present on residues Lys-44 and Lys-48. Asn-49 is subject to Asparagine amide.

In terms of tissue distribution, expressed by the venom gland.

The protein resides in the secreted. In terms of biological role, potent anti-inflammatory agent. At low concentrations, mediates the degranulation of mast cells thus evoking an inflammatory response. Also acts as a neurotoxin capable of blocking a class of voltage-gated potassium channels. The chain is Mast cell degranulating peptide from Apis mellifera (Honeybee).